Reading from the N-terminus, the 327-residue chain is uncharacterized protein (327 aa).

Residues 12-32 (LVVVVVAIAIFTLVLLMLWEG) traverse the membrane as a helical segment. Residues 149 to 170 (AFSAVETSEGSDQESEGADEQG) are disordered. Over residues 157-167 (EGSDQESEGAD) the composition is skewed to acidic residues. Positions 162–227 (ESEGADEQGK…LDEENREVAE (66 aa)) form a coiled coil.

It is found in the membrane. This is an uncharacterized protein from Encephalitozoon cuniculi (strain GB-M1) (Microsporidian parasite).